Consider the following 400-residue polypeptide: MKIVLAYSGGLDTSIILKWLKETYGAEVIAFTADIGQGEEVEEAREKALRTGASKAIALDLKEEFVRDFVFPMMRAGAVYEGYYLLGTSIARPLIAKHLVRIAEEEGAEAIAHGATGKGNDQVRFELTAYALKPDIKVIAPWREWSFQGRKEMIAYAEAHGIPVPVTQEKPYSMDANLLHISYEGGVLEDPWAEPPKGMFRMTQDPEEAPDAPEYVEVEFFEGDPVAVNGERLSPAALLQRLNELGGRHGVGRVDIVENRFVGMKSRGVYETPGGTILYHARRAVESLTLDREVLHQRDMLSPKYAELVYYGFWYAPEREALQAYFDHVAKNVTGVARLKLYKGNVYVVGRKAPKSLYRQDLVSFDEAGGYDQKDAEGFIKIQALRLRVRALVEREGHGA.

Residues 6–14 and A33 contribute to the ATP site; that span reads AYSGGLDTS. 2 residues coordinate L-citrulline: Y84 and S89. ATP is bound at residue G114. 3 residues coordinate L-aspartate: T116, N120, and D121. Residue N120 participates in L-citrulline binding. L-citrulline contacts are provided by R124, S173, S182, E258, and Y270.

This sequence belongs to the argininosuccinate synthase family. Type 1 subfamily. As to quaternary structure, homotetramer.

Its subcellular location is the cytoplasm. It carries out the reaction L-citrulline + L-aspartate + ATP = 2-(N(omega)-L-arginino)succinate + AMP + diphosphate + H(+). Its pathway is amino-acid biosynthesis; L-arginine biosynthesis; L-arginine from L-ornithine and carbamoyl phosphate: step 2/3. The sequence is that of Argininosuccinate synthase from Thermus thermophilus (strain ATCC BAA-163 / DSM 7039 / HB27).